The following is a 321-amino-acid chain: Manganese-dependent ADP-ribose/CDP-alcohol diphosphatase (321 aa).

The Zn(2+) site is built by D25, Q27, D72, N107, H226, H263, and H265.

This sequence belongs to the ADPRibase-Mn family. In terms of assembly, monomer. Mg(2+) serves as cofactor.

It carries out the reaction CDP-choline + H2O = phosphocholine + CMP + 2 H(+). The catalysed reaction is ADP-D-ribose + H2O = D-ribose 5-phosphate + AMP + 2 H(+). It catalyses the reaction CDP-glycerol + H2O = sn-glycerol 3-phosphate + CMP + 2 H(+). Its function is as follows. Hydrolyzes ADP-ribose, IDP-ribose, CDP-glycerol, CDP-choline and CDP-ethanolamine, but not other non-reducing ADP-sugars or CDP-glucose. This chain is Manganese-dependent ADP-ribose/CDP-alcohol diphosphatase, found in Oryza sativa subsp. japonica (Rice).